The chain runs to 174 residues: RNA pyrophosphohydrolase (174 aa).

Positions 6–149 constitute a Nudix hydrolase domain; the sequence is GFRANVGIVI…KREVYRRAMK (144 aa). A Nudix box motif is present at residues 38 to 59; that stretch reads GGIDEGETAEQTMYRELYEEVG.

Belongs to the Nudix hydrolase family. RppH subfamily. Requires a divalent metal cation as cofactor.

Functionally, accelerates the degradation of transcripts by removing pyrophosphate from the 5'-end of triphosphorylated RNA, leading to a more labile monophosphorylated state that can stimulate subsequent ribonuclease cleavage. In Pseudoalteromonas atlantica (strain T6c / ATCC BAA-1087), this protein is RNA pyrophosphohydrolase.